The primary structure comprises 168 residues: Cofilin-1-B (168 aa).

Residue alanine 2 is modified to N-acetylalanine. The ADF-H domain occupies 4–153; the sequence is GVMVSDDVVK…NDPCNLADKL (150 aa). Positions 30–34 match the Nuclear localization signal motif; the sequence is KKRKK.

This sequence belongs to the actin-binding proteins ADF family. In terms of processing, inactive when phosphorylated. Phosphorylation levels vary during development. Oocytes contain only the phosphorylated form, and 80-95% of cfl1 protein is phosphorylated in unfertilized eggs. Rapid dephosphorylation occurs within 30 minutes after fertilization. Phosphorylation levels increase again between the morula and blastula stages (5-8 hpf) and then decrease again as gastrulation approaches. Dephosphorylated by pdxp. As to expression, expressed diffusely in both animal and vegetal hemispheres of the oocyte. During cleavage, expression accumulates around the cleavage furrow, along the vegetal membrane, and later in the midbody. Strongly expressed in the animal hemisphere during blastula stages, with most cells showing expression by gastrulation. By stage 17, expression is highest in cells of the developing neuroectoderm, and at stage 24 the notochord, neural tube, neural crest, somites and some cells of the archenteron show high expression. By stage 35, expression has declined in the notochord, but remains in the neural tube, epidermis and a layer of cells in the archenteron. Also highly expressed in the retina and neuronal cell bodies at the base of the cement gland but not the cement gland itself. At stage 38, expression is widespread, being highest in the nervous system and retina. In the adult, expression is high in the brain, heart, oocyte, stomach, and low in skeletal muscle.

It is found in the nucleus matrix. The protein localises to the cytoplasm. It localises to the cytoskeleton. Its subcellular location is the cell cortex. The protein resides in the membrane. May play a role in the regulation of cell morphology and cytoskeletal organization. Binds to F-actin and exhibits pH-sensitive F-actin depolymerizing activity. Required for formation of the cleavage furrow during cytokinesis. This Xenopus laevis (African clawed frog) protein is Cofilin-1-B (cfl1-b).